The primary structure comprises 342 residues: Lipopolysaccharide heptosyltransferase 1 (342 aa).

ADP-L-glycero-beta-D-manno-heptose is bound by residues S188, S189, K193, E225, D268, S269, G270, and H273.

It belongs to the glycosyltransferase 9 family.

The protein localises to the cell inner membrane. It catalyses the reaction an alpha-Kdo-(2-&gt;4)-alpha-Kdo-(2-&gt;6)-lipid A + ADP-L-glycero-beta-D-manno-heptose = an L-alpha-D-Hep-(1-&gt;5)-[alpha-Kdo-(2-&gt;4)]-alpha-Kdo-(2-&gt;6)-lipid A + ADP + H(+). It participates in bacterial outer membrane biogenesis; LPS core biosynthesis. In terms of biological role, glycosyltransferase involved in the biosynthesis of the core oligosaccharide region of lipopolysaccharide (LPS). Catalyzes the addition of the first heptose unit to one 3-deoxy-D-manno-octulosonic acid (Kdo) residue of the Kdo2-lipid A module. The sequence is that of Lipopolysaccharide heptosyltransferase 1 from Campylobacter coli.